A 249-amino-acid polypeptide reads, in one-letter code: UPF0246 protein EUBREC_1226 (249 aa).

It belongs to the UPF0246 family.

This is UPF0246 protein EUBREC_1226 from Agathobacter rectalis (strain ATCC 33656 / DSM 3377 / JCM 17463 / KCTC 5835 / VPI 0990) (Eubacterium rectale).